Consider the following 226-residue polypeptide: ATP synthase F(0) complex subunit a (226 aa).

6 helical membrane passes run 11–31, 68–88, 97–117, 138–158, 164–184, and 194–214; these read APTILGQPATIPIIMFPTLLI, WSLMLMSLITFITMTNLLGLL, QLSMNLAMAIPLWAGTIITGL, IPMLVMIETISLLIQPMALAV, ITAGHLLMHLIGNTMLTLSTI, and VLLMLLTILEIAVALIQAYVF.

It belongs to the ATPase A chain family. In terms of assembly, component of the ATP synthase complex composed at least of ATP5F1A/subunit alpha, ATP5F1B/subunit beta, ATP5MC1/subunit c (homooctomer), MT-ATP6/subunit a, MT-ATP8/subunit 8, ATP5ME/subunit e, ATP5MF/subunit f, ATP5MG/subunit g, ATP5MK/subunit k, ATP5MJ/subunit j, ATP5F1C/subunit gamma, ATP5F1D/subunit delta, ATP5F1E/subunit epsilon, ATP5PF/subunit F6, ATP5PB/subunit b, ATP5PD/subunit d, ATP5PO/subunit OSCP. ATP synthase complex consists of a soluble F(1) head domain (subunits alpha(3) and beta(3)) - the catalytic core - and a membrane F(0) domain - the membrane proton channel (subunits c, a, 8, e, f, g, k and j). These two domains are linked by a central stalk (subunits gamma, delta, and epsilon) rotating inside the F1 region and a stationary peripheral stalk (subunits F6, b, d, and OSCP). Interacts with DNAJC30; interaction is direct.

The protein resides in the mitochondrion inner membrane. It catalyses the reaction H(+)(in) = H(+)(out). Functionally, subunit a, of the mitochondrial membrane ATP synthase complex (F(1)F(0) ATP synthase or Complex V) that produces ATP from ADP in the presence of a proton gradient across the membrane which is generated by electron transport complexes of the respiratory chain. ATP synthase complex consist of a soluble F(1) head domain - the catalytic core - and a membrane F(1) domain - the membrane proton channel. These two domains are linked by a central stalk rotating inside the F(1) region and a stationary peripheral stalk. During catalysis, ATP synthesis in the catalytic domain of F(1) is coupled via a rotary mechanism of the central stalk subunits to proton translocation. With the subunit c (ATP5MC1), forms the proton-conducting channel in the F(0) domain, that contains two crucial half-channels (inlet and outlet) that facilitate proton movement from the mitochondrial intermembrane space (IMS) into the matrix. Protons are taken up via the inlet half-channel and released through the outlet half-channel, following a Grotthuss mechanism. This is ATP synthase F(0) complex subunit a from Papio hamadryas (Hamadryas baboon).